A 541-amino-acid chain; its full sequence is Molybdate transporter 1 (541 aa).

The next 5 membrane-spanning stretches (helical) occupy residues 24–44, 58–78, 98–118, 137–157, and 168–188; these read LLLS…PLLL, LLFS…PLPV, TVAA…TGGL, AGMS…GWLW, and GLGE…GLVV. Residues 193–213 are disordered; it reads QQQQQQQSGEKPQERRKKRSK. Transmembrane regions (helical) follow at residues 214–234 and 287–307; these read MPVQ…FAVV and MAIA…SALA. Positions 317-366 are disordered; that stretch reads PQLYADDESSDSPLSPSPSASSSSLSSAPPQTPSAETPKPLSSPTSAEEG. Over residues 327 to 351 the composition is skewed to low complexity; sequence DSPLSPSPSASSSSLSSAPPQTPSA. The next 2 helical transmembrane spans lie at 413 to 433 and 435 to 455; these read IILL…PGLL and LLGK…GVEL. The tract at residues 510 to 541 is disordered; the sequence is TEKGRGGEQGLLGEEEEEEEQGRVDEESPLLR.

The protein belongs to the SLC26A/SulP transporter (TC 2.A.53) family.

The protein localises to the vacuole membrane. Exports stored molybdate from the vacuole into the cytosol, making it available for molybdate cofactor (Moco) biosynthesis. Plays a role in molybdate homeostasis as high cytosolic levels of molybdate are toxic to cells. Not required for molybdate import into cells. This Neurospora crassa (strain ATCC 24698 / 74-OR23-1A / CBS 708.71 / DSM 1257 / FGSC 987) protein is Molybdate transporter 1.